The chain runs to 331 residues: Ketol-acid reductoisomerase (NADP(+)) (331 aa).

The region spanning 2-182 (AQLFYDSDAD…GGTRAGILET (181 aa)) is the KARI N-terminal Rossmann domain. NADP(+) contacts are provided by residues 25-28 (YGSQ), serine 51, serine 53, and 83-86 (DEFQ). Histidine 108 is a catalytic residue. Glycine 134 lines the NADP(+) pocket. A KARI C-terminal knotted domain is found at 183–328 (NFKEETETDL…KGLRSMFSWL (146 aa)). 4 residues coordinate Mg(2+): aspartate 191, glutamate 195, glutamate 227, and glutamate 231. Serine 252 serves as a coordination point for substrate.

The protein belongs to the ketol-acid reductoisomerase family. Mg(2+) serves as cofactor.

The enzyme catalyses (2R)-2,3-dihydroxy-3-methylbutanoate + NADP(+) = (2S)-2-acetolactate + NADPH + H(+). The catalysed reaction is (2R,3R)-2,3-dihydroxy-3-methylpentanoate + NADP(+) = (S)-2-ethyl-2-hydroxy-3-oxobutanoate + NADPH + H(+). It participates in amino-acid biosynthesis; L-isoleucine biosynthesis; L-isoleucine from 2-oxobutanoate: step 2/4. It functions in the pathway amino-acid biosynthesis; L-valine biosynthesis; L-valine from pyruvate: step 2/4. Involved in the biosynthesis of branched-chain amino acids (BCAA). Catalyzes an alkyl-migration followed by a ketol-acid reduction of (S)-2-acetolactate (S2AL) to yield (R)-2,3-dihydroxy-isovalerate. In the isomerase reaction, S2AL is rearranged via a Mg-dependent methyl migration to produce 3-hydroxy-3-methyl-2-ketobutyrate (HMKB). In the reductase reaction, this 2-ketoacid undergoes a metal-dependent reduction by NADPH to yield (R)-2,3-dihydroxy-isovalerate. The polypeptide is Ketol-acid reductoisomerase (NADP(+)) (Synechococcus sp. (strain CC9605)).